Here is a 494-residue protein sequence, read N- to C-terminus: Serine/threonine-protein kinase PBL13 (494 aa).

A lipid anchor (S-palmitoyl cysteine) is attached at C4. T65 carries the post-translational modification Phosphothreonine. In terms of domain architecture, Protein kinase spans 76–356; the sequence is FSSSNFLGEG…STVVSVLQDI (281 aa). Residues 82 to 90 and K111 contribute to the ATP site; that span reads LGEGGFGPV. Y156 bears the Phosphotyrosine mark. D206 acts as the Proton acceptor in catalysis. S210 bears the Phosphoserine mark. S240 is subject to Phosphoserine; by autocatalysis. A phosphothreonine mark is found at T241 and T246. Phosphotyrosine is present on Y254. Residue S321 is modified to Phosphoserine; by autocatalysis. T323 and T383 each carry phosphothreonine; by autocatalysis. S384 carries the phosphoserine; by autocatalysis modification. Residues T395, T398, T406, T413, T421, and T428 each carry the phosphothreonine; by autocatalysis modification. Position 429 is a phosphoserine; by autocatalysis (S429). Residues 434–471 are disordered; it reads DKTRREVKETSLQNFDKPRNVSTTDNHQKFRSPAHTAR. T443 carries the post-translational modification Phosphothreonine; by autocatalysis. Residues 443–458 show a composition bias toward polar residues; that stretch reads TSLQNFDKPRNVSTTD. 2 positions are modified to phosphoserine; by autocatalysis: S444 and S455. Residue T456 is modified to Phosphothreonine; by autocatalysis. Residues 462 to 471 show a composition bias toward basic residues; the sequence is KFRSPAHTAR. At Y481 the chain carries Phosphotyrosine; by autocatalysis.

It belongs to the protein kinase superfamily. Ser/Thr protein kinase family. As to quaternary structure, interacts with RBHOD. Interaction is disrupted by flagellin-induced immune signaling.

It localises to the cell membrane. The enzyme catalyses L-seryl-[protein] + ATP = O-phospho-L-seryl-[protein] + ADP + H(+). It carries out the reaction L-threonyl-[protein] + ATP = O-phospho-L-threonyl-[protein] + ADP + H(+). Functionally, involved in defense responses. Acts as a negative regulator of plant immune responses. This Arabidopsis thaliana (Mouse-ear cress) protein is Serine/threonine-protein kinase PBL13.